The chain runs to 107 residues: Acetyl-CoA acetyltransferase (107 aa).

Cys-88 serves as the catalytic Acyl-thioester intermediate.

This sequence belongs to the thiolase-like superfamily. Thiolase family. As to quaternary structure, homotetramer.

The protein resides in the cytoplasm. It carries out the reaction 2 acetyl-CoA = acetoacetyl-CoA + CoA. Catalyzes the condensation of two molecules of acetyl-CoA to produce acetoacetyl-CoA. This chain is Acetyl-CoA acetyltransferase (thi), found in Clostridioides difficile (Peptoclostridium difficile).